A 91-amino-acid polypeptide reads, in one-letter code: Late embryogenesis abundant protein EMB564 (91 aa).

Composition is skewed to basic and acidic residues over residues 1 to 19 (MASG…REGE) and 32 to 51 (EAQE…RREQ). Residues 1 to 91 (MASGQESRKE…VTIDESKFTK (91 aa)) form a disordered region.

Belongs to the small hydrophilic plant seed protein family.

In terms of biological role, LEA proteins are late embryonic proteins abundant in higher plant seed embryos. They may play an essential role in seed survival and in controlling water exchanges during seed desiccation and imbibition. The sequence is that of Late embryogenesis abundant protein EMB564 from Zea mays (Maize).